The following is a 134-amino-acid chain: MRHGHGLRKLNRTSSHRLAMLQNMMNSLIEHEAIKTTVPKAKELRRVIEPMITLAKEDTVANRRLAFDRLRDRDSVTKLFNVLGPLFKARPGGYTRILKMGYRVGDNAPMAFVEFVERPEVAEVSENSSADAAK.

This sequence belongs to the bacterial ribosomal protein bL17 family. Part of the 50S ribosomal subunit. Contacts protein L32.

The polypeptide is Large ribosomal subunit protein bL17 (Paracidovorax citrulli (strain AAC00-1) (Acidovorax citrulli)).